Here is a 599-residue protein sequence, read N- to C-terminus: Serine/threonine-protein kinase Nek1 (599 aa).

One can recognise a Protein kinase domain in the interval 4–258 (YEVLEQIGKG…AAELLKHPHL (255 aa)). ATP contacts are provided by residues 10–18 (IGKGAFGSA) and lysine 33. The active-site Proton acceptor is the aspartate 129. Disordered stretches follow at residues 364–386 (SIVK…EPPK), 461–482 (SEDP…PQHC), and 504–542 (DDDD…DTSS). The segment covering 511–530 (DSSSGRNNAAAAASSRAGSS) has biased composition (low complexity).

The protein belongs to the protein kinase superfamily. NEK Ser/Thr protein kinase family. NIMA subfamily. In terms of tissue distribution, expressed in anthers, pistils and leaves.

The catalysed reaction is L-seryl-[protein] + ATP = O-phospho-L-seryl-[protein] + ADP + H(+). The enzyme catalyses L-threonyl-[protein] + ATP = O-phospho-L-threonyl-[protein] + ADP + H(+). May be involved in plant development processes. This Oryza sativa subsp. japonica (Rice) protein is Serine/threonine-protein kinase Nek1.